Here is a 102-residue protein sequence, read N- to C-terminus: NADH-quinone oxidoreductase subunit K (102 aa).

3 helical membrane passes run 4 to 24 (IGLN…LVGV), 31 to 51 (LMLF…FAAI), and 65 to 85 (FFVI…LIVW).

The protein belongs to the complex I subunit 4L family. As to quaternary structure, NDH-1 is composed of 14 different subunits. Subunits NuoA, H, J, K, L, M, N constitute the membrane sector of the complex.

Its subcellular location is the cell inner membrane. It carries out the reaction a quinone + NADH + 5 H(+)(in) = a quinol + NAD(+) + 4 H(+)(out). NDH-1 shuttles electrons from NADH, via FMN and iron-sulfur (Fe-S) centers, to quinones in the respiratory chain. The immediate electron acceptor for the enzyme in this species is believed to be ubiquinone. Couples the redox reaction to proton translocation (for every two electrons transferred, four hydrogen ions are translocated across the cytoplasmic membrane), and thus conserves the redox energy in a proton gradient. The polypeptide is NADH-quinone oxidoreductase subunit K (Sulfurimonas denitrificans (strain ATCC 33889 / DSM 1251) (Thiomicrospira denitrificans (strain ATCC 33889 / DSM 1251))).